Consider the following 259-residue polypeptide: MVKIKILKKTEDSITFILEGVSVAFANALRRTILGEVPTFAVDEVEFYENDSALFDEIIAHRLAMIPLKTPTDRFELDALELDDYTVTLSLEAEGPGIVYSGDLKSDDPDVKPVTPDIPIVKLAKGQRLVFNAYAKLGRGKDHAKWQPGFTYYKYFTRVHISKKINGWEKLAKLAKKRGLPTKENEEEVIVETIKPFYIPKEFEEYEGKEIWEEIVPDTYVFVVETNGELPVEEIVKIALRILMRKADRFINELQRLAG.

The protein belongs to the archaeal Rpo3/eukaryotic RPB3 RNA polymerase subunit family. In terms of assembly, part of the RNA polymerase complex.

It localises to the cytoplasm. The enzyme catalyses RNA(n) + a ribonucleoside 5'-triphosphate = RNA(n+1) + diphosphate. In terms of biological role, DNA-dependent RNA polymerase (RNAP) catalyzes the transcription of DNA into RNA using the four ribonucleoside triphosphates as substrates. The protein is DNA-directed RNA polymerase subunit Rpo3 of Pyrococcus horikoshii (strain ATCC 700860 / DSM 12428 / JCM 9974 / NBRC 100139 / OT-3).